The following is a 232-amino-acid chain: Putative membrane protein ORF8 (232 aa).

The span at 71 to 84 (GSSAASIPSAPTPD) shows a compositional bias: low complexity. The interval 71–121 (GSSAASIPSAPTPDATRESPTGEPHRDRALSTETPTPEPSRDGGSTPEVLH) is disordered. The next 2 helical transmembrane spans lie at 166–182 (VFARALAAAEIAIGSVA) and 195–211 (LVVTSLVFAGVALWVIV).

It localises to the membrane. The protein is Putative membrane protein ORF8 (ORF8) of Ictalurid herpesvirus 1 (strain Auburn) (IcHV-1).